A 54-amino-acid chain; its full sequence is Ovomucoid (54 aa).

In terms of domain architecture, Kazal-like spans Val4–Cys54. Cystine bridges form between Cys6–Cys36, Cys14–Cys33, and Cys22–Cys54. N-linked (GlcNAc...) asparagine glycosylation is present at Asn43.

The protein localises to the secreted. The chain is Ovomucoid from Rhea americana (Greater rhea).